Reading from the N-terminus, the 431-residue chain is Glutamate-1-semialdehyde 2,1-aminomutase 2 (431 aa).

At Lys268 the chain carries N6-(pyridoxal phosphate)lysine.

It belongs to the class-III pyridoxal-phosphate-dependent aminotransferase family. HemL subfamily. Homodimer. Pyridoxal 5'-phosphate serves as cofactor.

It localises to the cytoplasm. The enzyme catalyses (S)-4-amino-5-oxopentanoate = 5-aminolevulinate. The protein operates within porphyrin-containing compound metabolism; protoporphyrin-IX biosynthesis; 5-aminolevulinate from L-glutamyl-tRNA(Glu): step 2/2. The protein is Glutamate-1-semialdehyde 2,1-aminomutase 2 of Bacillus licheniformis (strain ATCC 14580 / DSM 13 / JCM 2505 / CCUG 7422 / NBRC 12200 / NCIMB 9375 / NCTC 10341 / NRRL NRS-1264 / Gibson 46).